The primary structure comprises 426 residues: Enolase 1 (426 aa).

Gln-163 lines the (2R)-2-phosphoglycerate pocket. Glu-205 (proton donor) is an active-site residue. Residues Asp-242, Glu-283, and Asp-310 each coordinate Mg(2+). (2R)-2-phosphoglycerate is bound by residues Lys-335, Arg-364, Ser-365, and Lys-386. Lys-335 serves as the catalytic Proton acceptor.

The protein belongs to the enolase family. Requires Mg(2+) as cofactor.

It is found in the cytoplasm. It localises to the secreted. The protein resides in the cell surface. The catalysed reaction is (2R)-2-phosphoglycerate = phosphoenolpyruvate + H2O. The protein operates within carbohydrate degradation; glycolysis; pyruvate from D-glyceraldehyde 3-phosphate: step 4/5. Its function is as follows. Catalyzes the reversible conversion of 2-phosphoglycerate (2-PG) into phosphoenolpyruvate (PEP). It is essential for the degradation of carbohydrates via glycolysis. In Streptomyces coelicolor (strain ATCC BAA-471 / A3(2) / M145), this protein is Enolase 1.